Reading from the N-terminus, the 32-residue chain is Hemocyanin C chain (32 aa).

Belongs to the tyrosinase family. Hemocyanin subfamily. Hemolymph.

The protein resides in the secreted. It localises to the extracellular space. Functionally, hemocyanins are copper-containing oxygen carriers occurring freely dissolved in the hemolymph of many mollusks and arthropods. The protein is Hemocyanin C chain of Cherax destructor (Common yabby crayfish).